The primary structure comprises 342 residues: Adenylate isopentenyltransferase 6, chloroplastic (342 aa).

The transit peptide at 1–33 directs the protein to the chloroplast; the sequence is MQQLMTLLSPPLSHSSLLPTVTTKFGSPRLVTT. 52–59 contacts ATP; that stretch reads GTTGTGKS.

Belongs to the IPP transferase family. As to expression, expressed in siliques, at the mRNA level.

The protein localises to the plastid. It localises to the chloroplast. It carries out the reaction dimethylallyl diphosphate + ADP = N(6)-(dimethylallyl)adenosine 5'-diphosphate + diphosphate. It catalyses the reaction dimethylallyl diphosphate + ATP = N(6)-(dimethylallyl)adenosine 5'-triphosphate + diphosphate. Functionally, involved in cytokinin biosynthesis. Catalyzes the transfer of an isopentenyl group from dimethylallyl diphosphate (DMAPP) to ATP and ADP. The polypeptide is Adenylate isopentenyltransferase 6, chloroplastic (IPT6) (Arabidopsis thaliana (Mouse-ear cress)).